The chain runs to 141 residues: Hemoglobin subunit alpha-1 (141 aa).

One can recognise a Globin domain in the interval 1-141; the sequence is VLTDEDKARV…LSKDLVSKYR (141 aa). His-58 provides a ligand contact to O2. His-87 contributes to the heme b binding site.

This sequence belongs to the globin family. Heterotetramer of two alpha chains and two beta chains. As to expression, red blood cells.

Involved in oxygen transport from the lung to the various peripheral tissues. The polypeptide is Hemoglobin subunit alpha-1 (Naja naja (Indian cobra)).